Reading from the N-terminus, the 382-residue chain is F-box/LRR-repeat/kelch-repeat protein At1g09650 (382 aa).

One can recognise an F-box domain in the interval 7 to 52 (CLMMESLPHEVVECILERLDADPLLRFKAVSKQWKSTIESPFFQRR). The stretch at 78 to 101 (IEALTTLVLGSSSSVKIPTPWEEE) is one LRR 1 repeat. Residues 180–227 (PVWLYNSIEIGLENATTCEVFDFSTNAWRYVSPAAPYRIVGCPAPVCV) form a Kelch 1 repeat. The LRR 2 repeat unit spans residues 239–262 (ETKILSFDLHTETFQVVSKAPFAN). The stretch at 270–319 (MCNLDNRLCVSEMKLPNQVIWSFNSGNKTWHKMCSINLDITSRWFGPTQV) is one Kelch 2 repeat.

This Arabidopsis thaliana (Mouse-ear cress) protein is F-box/LRR-repeat/kelch-repeat protein At1g09650.